The chain runs to 172 residues: Translation initiation factor IF-3 (172 aa).

Belongs to the IF-3 family. As to quaternary structure, monomer.

The protein localises to the cytoplasm. Functionally, IF-3 binds to the 30S ribosomal subunit and shifts the equilibrium between 70S ribosomes and their 50S and 30S subunits in favor of the free subunits, thus enhancing the availability of 30S subunits on which protein synthesis initiation begins. This Campylobacter concisus (strain 13826) protein is Translation initiation factor IF-3.